Here is a 494-residue protein sequence, read N- to C-terminus: Bifunctional pantoate ligase/cytidylate kinase (494 aa).

The pantoate--beta-alanine ligase stretch occupies residues 1 to 258 (MHFVPTMGGL…CGSTRLIDHA (258 aa)). 7 to 14 (MGGLHHGH) contacts ATP. H14 acts as the Proton donor in catalysis. Residue Q41 participates in (R)-pantoate binding. Q41 serves as a coordination point for beta-alanine. 130–133 (GEKD) provides a ligand contact to ATP. Q136 lines the (R)-pantoate pocket. Residues V159 and 167–170 (SSSR) contribute to the ATP site. The tract at residues 259–494 (FLMTRSPLVA…VGEEVWPTPV (236 aa)) is cytidylate kinase.

The protein in the N-terminal section; belongs to the pantothenate synthetase family. This sequence in the C-terminal section; belongs to the cytidylate kinase family. Type 1 subfamily.

It localises to the cytoplasm. The enzyme catalyses (R)-pantoate + beta-alanine + ATP = (R)-pantothenate + AMP + diphosphate + H(+). It catalyses the reaction CMP + ATP = CDP + ADP. The catalysed reaction is dCMP + ATP = dCDP + ADP. It participates in cofactor biosynthesis; (R)-pantothenate biosynthesis; (R)-pantothenate from (R)-pantoate and beta-alanine: step 1/1. Its function is as follows. Catalyzes the condensation of pantoate with beta-alanine in an ATP-dependent reaction via a pantoyl-adenylate intermediate. Functionally, catalyzes the transfer of a phosphate group from ATP to either CMP or dCMP to form CDP or dCDP and ADP, respectively. This chain is Bifunctional pantoate ligase/cytidylate kinase, found in Synechococcus sp. (strain CC9311).